An 856-amino-acid polypeptide reads, in one-letter code: Structure-specific endonuclease subunit SLX4 (856 aa).

Polar residues predominate over residues 1-19 (MDNAAIASQSNTPPSNGRS). 9 disordered regions span residues 1–24 (MDNAAIASQSNTPPSNGRSSARFV), 39–61 (IEPSSPFSPPSPSTLLTSLSKSP), 88–121 (VDSPKRQDKSITGSKAKPASTMRHGQRTASHKMA), 139–201 (KTRK…TDNE), 296–326 (GIQTPTESRPATNDSQSISSKQQRVKVKKPQ), 362–392 (KKMGVTKRTSGTERANAARGKSDTLKNGNGP), 621–640 (SKSSKLEPKPNQRNHKSQGD), 653–688 (RSDSISFVNTRSPKKRLAKTSVKSQESKSFSLSNEG), and 715–742 (DSVGEALPLSPSHSSNGNGTLHHPQDCD). The span at 51-60 (STLLTSLSKS) shows a compositional bias: low complexity. Positions 139-152 (KTRKKKAATAKRTR) are enriched in basic residues. A compositionally biased stretch (polar residues) spans 296–309 (GIQTPTESRPATND). A compositionally biased stretch (polar residues) spans 673-686 (SVKSQESKSFSLSN).

The protein belongs to the SLX4 family. Forms a heterodimer with SLX1. In terms of processing, phosphorylated in response to DNA damage.

It is found in the nucleus. In terms of biological role, regulatory subunit of the SLX1-SLX4 structure-specific endonuclease that resolves DNA secondary structures generated during DNA repair and recombination. Has endonuclease activity towards branched DNA substrates, introducing single-strand cuts in duplex DNA close to junctions with ss-DNA. This chain is Structure-specific endonuclease subunit SLX4, found in Ajellomyces dermatitidis (strain ER-3 / ATCC MYA-2586) (Blastomyces dermatitidis).